The chain runs to 227 residues: Broad specificity amino-acid racemase RacX (227 aa).

Residue Asp-51–Pro-53 coordinates substrate. The active-site Proton donor/acceptor is the Cys-82. Substrate-binding positions include Asn-83 to Ala-85 and Lys-161. Cys-191 acts as the Proton donor/acceptor in catalysis.

Belongs to the aspartate/glutamate racemases family. In terms of assembly, homodimer.

It catalyses the reaction an L-alpha-amino acid = a D-alpha-amino acid. The enzyme catalyses (2S,6S)-2,6-diaminopimelate = meso-2,6-diaminopimelate. The catalysed reaction is L-lysine = D-lysine. It carries out the reaction L-arginine = D-arginine. It catalyses the reaction L-ornithine = D-ornithine. The enzyme catalyses L-histidine = D-histidine. The catalysed reaction is L-alanine = D-alanine. It carries out the reaction L-tyrosine = D-tyrosine. It catalyses the reaction L-phenylalanine = D-phenylalanine. The enzyme catalyses L-serine = D-serine. The catalysed reaction is L-glutamine = D-glutamine. It carries out the reaction L-methionine = D-methionine. It catalyses the reaction L-asparagine = D-asparagine. The enzyme catalyses L-homoserine = D-homoserine. Functionally, amino-acid racemase able to utilize a broad range of substrates. Preferentially catalyzes the epimerization of LL-diaminopimelate, as well as the racemization of D-lysine, L-arginine, L-ornithine, L-lysine and D-arginine. Has lower activity against D-ornithine, L-histidine, L-alanine, L-tyrosine, L-phenylalanine, L-serine, L-glutamine, L-methionine, L-asparagine and L-homoserine. Has weak activity against L-norleucine, L-aminobutyric acid and L-norvaline. Has no activity toward nine L-amino acids (Thr, Glu, Asp, Val, Leu, Ile, Trp, Cit and Aad). D-amino acids might be used as components of peptidoglycan and/or be involved in peptidoglycan metabolism and remodeling. This Bacillus subtilis (strain 168) protein is Broad specificity amino-acid racemase RacX (racX).